The primary structure comprises 393 residues: Acetylornithine aminotransferase (393 aa).

Residues 105 to 106 (GA) and Phe138 each bind pyridoxal 5'-phosphate. Arg141 contributes to the N(2)-acetyl-L-ornithine binding site. A pyridoxal 5'-phosphate-binding site is contributed by 224-227 (DEVQ). Residue Lys253 is modified to N6-(pyridoxal phosphate)lysine. Ser281 provides a ligand contact to N(2)-acetyl-L-ornithine. Position 282 (Thr282) interacts with pyridoxal 5'-phosphate.

Belongs to the class-III pyridoxal-phosphate-dependent aminotransferase family. ArgD subfamily. As to quaternary structure, homodimer. Pyridoxal 5'-phosphate is required as a cofactor.

It is found in the cytoplasm. It catalyses the reaction N(2)-acetyl-L-ornithine + 2-oxoglutarate = N-acetyl-L-glutamate 5-semialdehyde + L-glutamate. It functions in the pathway amino-acid biosynthesis; L-arginine biosynthesis; N(2)-acetyl-L-ornithine from L-glutamate: step 4/4. This chain is Acetylornithine aminotransferase, found in Haemophilus ducreyi (strain 35000HP / ATCC 700724).